The chain runs to 105 residues: MIHFKGLIFYHYSAGDDVAIHTQDMAWLEESDVVVAEVTQPSLGVGYEIGRAVAWKKRILCLYRPDDGKGLSAMVRGAHDGKNFIVKDYQEPEVPGILKEFLSSS.

5-hydroxymethyl-dUMP-binding residues include G6, I8, S42, G44, E48, and S72.

The protein belongs to the 2'-deoxynucleoside 5'-phosphate N-hydrolase 1 family. In terms of assembly, monomer and homodimer.

The protein localises to the cytoplasm. The protein resides in the nucleus. The catalysed reaction is 5-hydroxymethyl-dUMP + H2O = 5-hydroxymethyluracil + 2-deoxy-D-ribose 5-phosphate. Part of a nucleotide salvage pathway that eliminates epigenetically modified 5-hydroxymethyl-dCMP (hmdCMP) in a two-step process entailing deamination to cytotoxic 5-hydroxymethyl-dUMP (hmdUMP), followed by its hydrolysis into 5-hydroxymethyluracil (hmU) and 2-deoxy-D-ribose 5-phosphate (deoxyribosephosphate). Catalyzes the second step in that pathway, the hydrolysis of the N-glycosidic bond in hmdUMP, degrading this cytotoxic nucleotide to avoid its genomic integration. This is 5-hydroxymethyl-dUMP N-hydrolase from Branchiostoma floridae (Florida lancelet).